Reading from the N-terminus, the 69-residue chain is Conotoxin Eb6.22 (69 aa).

A signal peptide spans 1 to 17 (VLIIAVLFLTACQLTTA). Residues 18–41 (ETYSRGRQKHRARRSTDKNSKWTR) constitute a propeptide that is removed on maturation. 3 disulfide bridges follow: C43–C57, C50–C61, and C56–C68.

This sequence belongs to the conotoxin O1 superfamily. As to expression, expressed by the venom duct.

The protein resides in the secreted. The protein is Conotoxin Eb6.22 (E1) of Conus ebraeus (Hebrew cone).